Consider the following 499-residue polypeptide: Argininosuccinate lyase (499 aa).

The disordered stretch occupies residues 1–22 (MSDGEDHETANADDRDETVVRR). Positions 7-22 (HETANADDRDETVVRR) are enriched in basic and acidic residues.

The protein belongs to the lyase 1 family. Argininosuccinate lyase subfamily.

It localises to the cytoplasm. It carries out the reaction 2-(N(omega)-L-arginino)succinate = fumarate + L-arginine. It functions in the pathway amino-acid biosynthesis; L-arginine biosynthesis; L-arginine from L-ornithine and carbamoyl phosphate: step 3/3. The sequence is that of Argininosuccinate lyase from Haloarcula marismortui (strain ATCC 43049 / DSM 3752 / JCM 8966 / VKM B-1809) (Halobacterium marismortui).